Here is a 429-residue protein sequence, read N- to C-terminus: Probable proton-coupled zinc antiporter SLC30A4 (429 aa).

Residues 1-113 are Cytoplasmic-facing; that stretch reads MAGSGAWKRL…LLKQRKVKTR (113 aa). Residues 114 to 134 traverse the membrane as a helical segment; sequence LTIAAVLYLLFMIGELVGGYI. Topologically, residues 135–143 are lumenal; the sequence is ANSLAIMTD. The helical transmembrane segment at 144-164 threads the bilayer; it reads ALHMLTDLSAIILTLLALWLS. Zn(2+) is bound by residues histidine 146 and aspartate 150. Residues 165 to 178 are Cytoplasmic-facing; sequence SKSPTKRFTFGFHR. A helical transmembrane segment spans residues 179 to 199; it reads LEVLSAMISVLLVYILMGFLL. At 200 to 216 the chain is on the lumenal side; the sequence is YEAVQRTIHMKYEINGD. A helical transmembrane segment spans residues 217–237; it reads IMLITAAIGVAVNVIMGFLLN. Residues 238-274 lie on the Cytoplasmic side of the membrane; that stretch reads QSGHHHAHSHSLPSNSPTTGPRCGHNQGQDSLAVRAA. Positions 240-264 are zinc binding; sequence GHHHAHSHSLPSNSPTTGPRCGHNQ. Residues 275-295 traverse the membrane as a helical segment; it reads FVHALGDLVQSVGVLIAAYII. Zn(2+) is bound by residues histidine 277 and aspartate 281. Residues 296-310 lie on the Lumenal side of the membrane; sequence RFKPEYRIADPICTY. The chain crosses the membrane as a helical span at residues 311–331; that stretch reads VFSLLVAFTTFRIIWDTVVII. Topologically, residues 332–429 are cytoplasmic; sequence LEGVPSHLNV…TCANCQSSSS (98 aa).

This sequence belongs to the cation diffusion facilitator (CDF) transporter (TC 2.A.4) family. SLC30A subfamily. In terms of assembly, homodimerization could regulate efficiency for zinc transport. Interacts with TMEM163.

It localises to the endosome membrane. The protein resides in the late endosome membrane. It is found in the lysosome membrane. It carries out the reaction Zn(2+)(in) + 2 H(+)(out) = Zn(2+)(out) + 2 H(+)(in). In terms of biological role, probable proton-coupled zinc ion antiporter mediating zinc import from cytoplasm potentially into the endocytic compartment. Controls zinc deposition in milk. The chain is Probable proton-coupled zinc antiporter SLC30A4 from Bos taurus (Bovine).